The following is a 325-amino-acid chain: Probable exonuclease subunit 1 (325 aa).

As to quaternary structure, could consist of two subunits: D13 and D12.

Its function is as follows. Possible exonuclease involved in phage DNA recombination, replication, and repair. In Escherichia coli (Enterobacteria phage T5), this protein is Probable exonuclease subunit 1 (D12).